We begin with the raw amino-acid sequence, 411 residues long: Proteasome-activating nucleotidase 2 (411 aa).

Residues 35–75 (IVAVNGELQAQLDDVEARREELREEVNRLQRENETLKTASL) are a coiled coil. Residues 196 to 201 (GTGKTM) and histidine 335 each bind ATP. The segment at 408-411 (SYIQ) is docks into pockets in the proteasome alpha-ring to cause gate opening.

Belongs to the AAA ATPase family. Homohexamer. The hexameric complex has a two-ring architecture resembling a top hat that caps the 20S proteasome core at one or both ends. Upon ATP-binding, the C-terminus of PAN interacts with the alpha-rings of the proteasome core by binding to the intersubunit pockets.

The protein localises to the cytoplasm. ATPase which is responsible for recognizing, binding, unfolding and translocation of substrate proteins into the archaeal 20S proteasome core particle. Is essential for opening the gate of the 20S proteasome via an interaction with its C-terminus, thereby allowing substrate entry and access to the site of proteolysis. Thus, the C-termini of the proteasomal ATPase function like a 'key in a lock' to induce gate opening and therefore regulate proteolysis. Unfolding activity requires energy from ATP hydrolysis, whereas ATP binding alone promotes ATPase-20S proteasome association which triggers gate opening, and supports translocation of unfolded substrates. The chain is Proteasome-activating nucleotidase 2 from Halobacterium salinarum (strain ATCC 700922 / JCM 11081 / NRC-1) (Halobacterium halobium).